The sequence spans 631 residues: 1-deoxy-D-xylulose-5-phosphate synthase (631 aa).

Thiamine diphosphate is bound by residues His73 and 114–116 (GHS). Residue Asp145 coordinates Mg(2+). Thiamine diphosphate contacts are provided by residues 146 to 147 (GA), Asn174, Tyr285, and Glu366. Asn174 contacts Mg(2+).

Belongs to the transketolase family. DXPS subfamily. As to quaternary structure, homodimer. The cofactor is Mg(2+). Thiamine diphosphate serves as cofactor.

The enzyme catalyses D-glyceraldehyde 3-phosphate + pyruvate + H(+) = 1-deoxy-D-xylulose 5-phosphate + CO2. It participates in metabolic intermediate biosynthesis; 1-deoxy-D-xylulose 5-phosphate biosynthesis; 1-deoxy-D-xylulose 5-phosphate from D-glyceraldehyde 3-phosphate and pyruvate: step 1/1. Catalyzes the acyloin condensation reaction between C atoms 2 and 3 of pyruvate and glyceraldehyde 3-phosphate to yield 1-deoxy-D-xylulose-5-phosphate (DXP). This chain is 1-deoxy-D-xylulose-5-phosphate synthase, found in Desulfitobacterium hafniense (strain DSM 10664 / DCB-2).